A 314-amino-acid chain; its full sequence is 4-hydroxy-3-methylbut-2-enyl diphosphate reductase (314 aa).

Residue C12 participates in [4Fe-4S] cluster binding. (2E)-4-hydroxy-3-methylbut-2-enyl diphosphate is bound by residues H41 and H74. H41 and H74 together coordinate dimethylallyl diphosphate. Residues H41 and H74 each contribute to the isopentenyl diphosphate site. [4Fe-4S] cluster is bound at residue C96. H124 is a binding site for (2E)-4-hydroxy-3-methylbut-2-enyl diphosphate. H124 serves as a coordination point for dimethylallyl diphosphate. Residue H124 participates in isopentenyl diphosphate binding. The active-site Proton donor is the E126. Residue T167 participates in (2E)-4-hydroxy-3-methylbut-2-enyl diphosphate binding. C197 lines the [4Fe-4S] cluster pocket. Residues S225, S226, N227, and S269 each contribute to the (2E)-4-hydroxy-3-methylbut-2-enyl diphosphate site. Positions 225, 226, 227, and 269 each coordinate dimethylallyl diphosphate. Positions 225, 226, 227, and 269 each coordinate isopentenyl diphosphate.

The protein belongs to the IspH family. It depends on [4Fe-4S] cluster as a cofactor.

It carries out the reaction isopentenyl diphosphate + 2 oxidized [2Fe-2S]-[ferredoxin] + H2O = (2E)-4-hydroxy-3-methylbut-2-enyl diphosphate + 2 reduced [2Fe-2S]-[ferredoxin] + 2 H(+). The catalysed reaction is dimethylallyl diphosphate + 2 oxidized [2Fe-2S]-[ferredoxin] + H2O = (2E)-4-hydroxy-3-methylbut-2-enyl diphosphate + 2 reduced [2Fe-2S]-[ferredoxin] + 2 H(+). The protein operates within isoprenoid biosynthesis; dimethylallyl diphosphate biosynthesis; dimethylallyl diphosphate from (2E)-4-hydroxy-3-methylbutenyl diphosphate: step 1/1. It participates in isoprenoid biosynthesis; isopentenyl diphosphate biosynthesis via DXP pathway; isopentenyl diphosphate from 1-deoxy-D-xylulose 5-phosphate: step 6/6. Catalyzes the conversion of 1-hydroxy-2-methyl-2-(E)-butenyl 4-diphosphate (HMBPP) into a mixture of isopentenyl diphosphate (IPP) and dimethylallyl diphosphate (DMAPP). Acts in the terminal step of the DOXP/MEP pathway for isoprenoid precursor biosynthesis. This Mannheimia succiniciproducens (strain KCTC 0769BP / MBEL55E) protein is 4-hydroxy-3-methylbut-2-enyl diphosphate reductase.